A 445-amino-acid polypeptide reads, in one-letter code: Phosphoglucosamine mutase (445 aa).

The active-site Phosphoserine intermediate is serine 102. Serine 102, aspartate 241, aspartate 243, and aspartate 245 together coordinate Mg(2+). Serine 102 carries the post-translational modification Phosphoserine.

It belongs to the phosphohexose mutase family. It depends on Mg(2+) as a cofactor. Post-translationally, activated by phosphorylation.

The enzyme catalyses alpha-D-glucosamine 1-phosphate = D-glucosamine 6-phosphate. In terms of biological role, catalyzes the conversion of glucosamine-6-phosphate to glucosamine-1-phosphate. This is Phosphoglucosamine mutase from Enterobacter sp. (strain 638).